The primary structure comprises 342 residues: MKFLDLCKVYIRSGGGGGGCVSFRREKFIEFGGPDGGDGGNGGSVWAEAVDGLNTLIDFRYQQHFFAKSGQPGMGSQRTGRSGDDIVLKVPVGTEIIDEDEETVIADLTEVGQRVLLAQGGNGGWGNLRFKSSTNRAPARANPGQPGIDRTIWLRLKLIADAGLLGLPNAGKSTFLSATSNARPKIADYPFTTLVPNLGVVGVDGKEFVIADIPGLIEGASEGRGLGDQFLAHVERCSVLLHLVDGTSSTIVKDYRTIIGELEAYGGDLALKPRITAMNKIDAMDSKQISDRRRALEKATGGKVFTISGVAGTGLMDVLRALWAEIDGARGDKVEEHAPWQP.

The Obg domain maps to 1–159 (MKFLDLCKVY…RTIWLRLKLI (159 aa)). The OBG-type G domain occupies 160–327 (ADAGLLGLPN…VLRALWAEID (168 aa)). GTP-binding positions include 166–173 (GLPNAGKS), 191–195 (FTTLV), 212–215 (DIPG), 279–282 (NKID), and 308–310 (SGV). S173 and T193 together coordinate Mg(2+).

The protein belongs to the TRAFAC class OBG-HflX-like GTPase superfamily. OBG GTPase family. As to quaternary structure, monomer. Mg(2+) is required as a cofactor.

It is found in the cytoplasm. Its function is as follows. An essential GTPase which binds GTP, GDP and possibly (p)ppGpp with moderate affinity, with high nucleotide exchange rates and a fairly low GTP hydrolysis rate. Plays a role in control of the cell cycle, stress response, ribosome biogenesis and in those bacteria that undergo differentiation, in morphogenesis control. In Cereibacter sphaeroides (strain KD131 / KCTC 12085) (Rhodobacter sphaeroides), this protein is GTPase Obg.